Consider the following 125-residue polypeptide: Secreted RxLR effector protein RXLR-C13 (125 aa).

A signal peptide spans 1–23 (MVNSLTFTLVVVCLVRSCDGVAA). The short motif at 43–73 (RVLQETATANDDVKKLSTSTKVDSKLNQEIK) is the RxLR-dEER element. N-linked (GlcNAc...) asparagine glycosylation is present at N85. Residues 106–123 (FFILATILLFPIAAYMVA) traverse the membrane as a helical segment.

Belongs to the RxLR effector family.

It localises to the secreted. The protein localises to the host endoplasmic reticulum membrane. Its function is as follows. Secreted effector that does not suppress pattern-triggered immunity (PTI) in plant host. This chain is Secreted RxLR effector protein RXLR-C13, found in Plasmopara halstedii (Downy mildew of sunflower).